The chain runs to 353 residues: RNA 3'-terminal phosphate cyclase (353 aa).

Residues Gln-100 and His-285–Gln-289 contribute to the ATP site. The active-site Tele-AMP-histidine intermediate is the His-311.

It belongs to the RNA 3'-terminal cyclase family. Type 1 subfamily.

Its subcellular location is the cytoplasm. It catalyses the reaction a 3'-end 3'-phospho-ribonucleotide-RNA + ATP = a 3'-end 2',3'-cyclophospho-ribonucleotide-RNA + AMP + diphosphate. In terms of biological role, catalyzes the conversion of 3'-phosphate to a 2',3'-cyclic phosphodiester at the end of RNA. The mechanism of action of the enzyme occurs in 3 steps: (A) adenylation of the enzyme by ATP; (B) transfer of adenylate to an RNA-N3'P to produce RNA-N3'PP5'A; (C) and attack of the adjacent 2'-hydroxyl on the 3'-phosphorus in the diester linkage to produce the cyclic end product. The biological role of this enzyme is unknown but it is likely to function in some aspects of cellular RNA processing. In Nitrosospira multiformis (strain ATCC 25196 / NCIMB 11849 / C 71), this protein is RNA 3'-terminal phosphate cyclase.